The primary structure comprises 62 residues: [Ser6, Val10, Asp11]-phyllokinin (62 aa).

The signal sequence occupies residues 1–22; it reads MSFLKKSLLLVLFLGLVSFSIC. Positions 23-51 are excised as a propeptide; it reads EEEKRETEEEENEDDMDEESEEKKRESPD. Positions 24–62 are disordered; sequence EEKRETEEEENEDDMDEESEEKKRESPDRPPGFSPFRVD. Residues 30-42 show a composition bias toward acidic residues; it reads EEEENEDDMDEES.

This sequence belongs to the frog skin active peptide (FSAP) family. Bradykinin-related peptide subfamily. In terms of tissue distribution, expressed by the skin glands.

It localises to the secreted. Induces relaxation of rat smooth muscle from tail artery and contraction of that from ileum, urinary bladder and uterus. Binds to both bradykinin receptor B1 (BDKRB1) and B2 (BDKRB2). In Agalychnis spurrelli (Gliding leaf frog), this protein is [Ser6, Val10, Asp11]-phyllokinin.